The primary structure comprises 476 residues: MAATTTILSSAAPTPLTAPPRARARAPAARRRRLRARDILGAALGLANGGASAALAAPLSYEETLRLSTDSGGGGGGGGEFALPDLGLGGVLDFVAQNPLVAAAGVAAVALPLVLAQVLGGASKPYGVVSAAAAYRALVEEPGAQLVDIRPPGDARQSGAPDLREAKKKAAAVPYDGEDKNGFLKKLSLRFKDPENTTLVILDKFDGNSELVAELVTANGYKAAFAVKDGAEGRRGWLSSSLPWTAPKKGFSLSDLIGDGTDGLPVTLGLAAATGLGILAYTEIETVLQFLGSAAIVQLVASKLIYAEDRKRTLKQIDDFFNKKVAPKELVDEIKEISQALLPSTGTKSQPAITEAAPATAEAAPAAATATAAPPAAPVEETSTEAAPAEPTPLSPYTNYPDLKPPSSPSPLAPAEATKNESESESAATESAPAVNSAPVAEAAPEAAPPAAPRPLSPYPNYPDLKPPSSPSPSAP.

Residues 1–21 (MAATTTILSSAAPTPLTAPPR) constitute a chloroplast transit peptide. Residues 1 to 29 (MAATTTILSSAAPTPLTAPPRARARAPAA) are disordered. The span at 11 to 21 (AAPTPLTAPPR) shows a compositional bias: low complexity. The transit peptide at 22 to 58 (ARARAPAARRRRLRARDILGAALGLANGGASAALAAP) directs the protein to the thylakoid. Residues 100 to 120 (LVAAAGVAAVALPLVLAQVLG) form a helical membrane-spanning segment. Positions 140–246 (EEPGAQLVDI…WLSSSLPWTA (107 aa)) constitute a Rhodanese domain. 2 helical membrane passes run 264-284 (LPVT…YTEI) and 287-307 (VLQF…LIYA). Residues 342-476 (LPSTGTKSQP…PPSSPSPSAP (135 aa)) form a disordered region. Residues 351-389 (PAITEAAPATAEAAPAAATATAAPPAAPVEETSTEAAPA) are compositionally biased toward low complexity. A compositionally biased stretch (pro residues) spans 403 to 412 (LKPPSSPSPL). Over residues 425-446 (ESAATESAPAVNSAPVAEAAPE) the composition is skewed to low complexity. Residues 447-476 (AAPPAAPRPLSPYPNYPDLKPPSSPSPSAP) show a composition bias toward pro residues.

In terms of assembly, component of high molecular weight thylakoid LFNRs-containing protein complexes containing LIR1, LFNR1, LFNR2, TIC62 and TROL proteins.

It is found in the plastid. Its subcellular location is the chloroplast thylakoid membrane. Its function is as follows. Rhodanese domain-containing protein required for anchoring ferredoxin--NADP reductase to the thylakoid membranes and sustaining efficient linear electron flow (LEF). The polypeptide is Protein THYLAKOID RHODANESE-LIKE, chloroplastic (Oryza sativa subsp. indica (Rice)).